A 360-amino-acid chain; its full sequence is Phospho-N-acetylmuramoyl-pentapeptide-transferase (360 aa).

Transmembrane regions (helical) follow at residues 27-47 (GALITAAFIVFLFGPAIISSL), 70-90 (GTPTMGGLMIFSGILGSSILW), 93-113 (LSSVYVWVVLMVMVGFGAIGF), 134-154 (LALEFVIAGFAAWIIMSAGQE), 168-188 (LLLNLGIFFIPFAAFVIVGAG), 205-225 (VMVAAASFGVIAYLSGNAIFA), 239-259 (LSVILGAVIGAGLGFLWFNAP), 262-282 (AIFMGDTGSLALGGLIGTVAV), 288-308 (IVLAIIGGLFVIEILSVIIQV), and 337-357 (QVVIRFWIIAVVLALIGLSTL).

Belongs to the glycosyltransferase 4 family. MraY subfamily. The cofactor is Mg(2+).

It localises to the cell inner membrane. It carries out the reaction UDP-N-acetyl-alpha-D-muramoyl-L-alanyl-gamma-D-glutamyl-meso-2,6-diaminopimeloyl-D-alanyl-D-alanine + di-trans,octa-cis-undecaprenyl phosphate = di-trans,octa-cis-undecaprenyl diphospho-N-acetyl-alpha-D-muramoyl-L-alanyl-D-glutamyl-meso-2,6-diaminopimeloyl-D-alanyl-D-alanine + UMP. It functions in the pathway cell wall biogenesis; peptidoglycan biosynthesis. Functionally, catalyzes the initial step of the lipid cycle reactions in the biosynthesis of the cell wall peptidoglycan: transfers peptidoglycan precursor phospho-MurNAc-pentapeptide from UDP-MurNAc-pentapeptide onto the lipid carrier undecaprenyl phosphate, yielding undecaprenyl-pyrophosphoryl-MurNAc-pentapeptide, known as lipid I. The polypeptide is Phospho-N-acetylmuramoyl-pentapeptide-transferase (Chelativorans sp. (strain BNC1)).